Here is a 202-residue protein sequence, read N- to C-terminus: Protein lin-28 homolog A (202 aa).

Disordered stretches follow at residues 1-33 (MPPA…GSFH) and 100-128 (SLQV…RSKG). Positions 18–29 (EEEEAASSEEDS) are enriched in acidic residues. A CSD domain is found at 33–106 (HGSGVCKWFN…GLESLQVTGP (74 aa)). Positions 107 to 130 (GGAPCVGSEKKPKGTQKRRSKGDR) are flexible linker. 2 CCHC-type zinc fingers span residues 129–146 (DRCF…ECQL) and 151–168 (KKCH…NCPI). Cys-131, Cys-134, His-139, Cys-144, Cys-153, Cys-156, His-161, and Cys-166 together coordinate Zn(2+). Residues 170–202 (AQQLSPGSQGKSTTSTGEEEDMSHTPLLPESTD) are disordered. A compositionally biased stretch (polar residues) spans 171–185 (QQLSPGSQGKSTTST). Residue Ser-174 is modified to Phosphoserine.

Belongs to the lin-28 family. In terms of assembly, monomer.

It is found in the cytoplasm. The protein resides in the rough endoplasmic reticulum. The protein localises to the P-body. It localises to the stress granule. Its subcellular location is the nucleus. It is found in the nucleolus. In terms of biological role, RNA-binding protein that inhibits processing of pre-let-7 miRNAs and regulates translation of mRNAs that control developmental timing, pluripotency and metabolism. Seems to recognize a common structural G-quartet (G4) feature in its miRNA and mRNA targets. 'Translational enhancer' that drives specific mRNAs to polysomes and increases the efficiency of protein synthesis. Its association with the translational machinery and target mRNAs results in an increased number of initiation events per molecule of mRNA and, indirectly, in mRNA stabilization. Suppressor of microRNA (miRNA) biogenesis, including that of let-7. Binds specific target miRNA precursors (pre-miRNAs), recognizing an 5'-GGAG-3' motif found in their terminal loop, and recruits uridylyltransferase. This results in the terminal uridylation of target pre-miRNAs. Uridylated pre-miRNAs fail to be processed by Dicer and undergo degradation. Localized to the periendoplasmic reticulum area, binds to a large number of spliced mRNAs and inhibits the translation of mRNAs destined for the ER, reducing the synthesis of transmembrane proteins, ER or Golgi lumen proteins, and secretory proteins. Binds to and enhances the translation of mRNAs for several metabolic enzymes, increasing glycolysis and oxidative phosphorylation. Which, with the let-7 repression may enhance tissue repair in adult tissue. The sequence is that of Protein lin-28 homolog A (lin28a) from Danio rerio (Zebrafish).